A 141-amino-acid polypeptide reads, in one-letter code: Hemoglobin subunit alpha (141 aa).

Residues 1-141 form the Globin domain; sequence VLSPDDKKHV…VSTVLTSKYR (141 aa). Serine 3 carries the post-translational modification Phosphoserine. 2 positions are modified to N6-succinyllysine: lysine 7 and lysine 11. Position 16 is an N6-acetyllysine; alternate (lysine 16). Lysine 16 bears the N6-succinyllysine; alternate mark. Tyrosine 24 carries the phosphotyrosine modification. Serine 35 is subject to Phosphoserine. Position 40 is an N6-succinyllysine (lysine 40). Serine 49 bears the Phosphoserine mark. Residue histidine 58 participates in O2 binding. A heme b-binding site is contributed by histidine 87. Serine 102 carries the post-translational modification Phosphoserine. Threonine 108 is subject to Phosphothreonine. Serine 124 and serine 131 each carry phosphoserine. Phosphothreonine occurs at positions 134 and 137. A Phosphoserine modification is found at serine 138.

This sequence belongs to the globin family. Heterotetramer of two alpha chains and two beta chains. Red blood cells.

Its function is as follows. Involved in oxygen transport from the lung to the various peripheral tissues. In terms of biological role, hemopressin acts as an antagonist peptide of the cannabinoid receptor CNR1. Hemopressin-binding efficiently blocks cannabinoid receptor CNR1 and subsequent signaling. The protein is Hemoglobin subunit alpha (HBA) of Theropithecus gelada (Gelada baboon).